A 545-amino-acid chain; its full sequence is Gamma-curcumene synthase (545 aa).

Residues Asp-299, Asp-303, Asn-442, and Glu-450 each coordinate Mg(2+). The short motif at 299–303 (DDTYD) is the DDXXD motif element.

The protein belongs to the terpene synthase family. Requires Mg(2+) as cofactor.

It localises to the cytoplasm. The protein resides in the cytosol. It catalyses the reaction (2E,6E)-farnesyl diphosphate = gamma-curcumene + diphosphate. It participates in secondary metabolite biosynthesis; terpenoid biosynthesis. In terms of biological role, sesquiterpene synthase involved in gamma-curcumene biosynthesis. The sequence is that of Gamma-curcumene synthase from Pogostemon cablin (Patchouli).